The sequence spans 339 residues: Protein-glutamate methylesterase/protein-glutamine glutaminase 2 (339 aa).

Positions 2–119 (NIGIVNDLPL…GLSTDASPQA (118 aa)) constitute a Response regulatory domain. D53 is subject to 4-aspartylphosphate. The 196-residue stretch at 141–336 (PGPAPERGQP…PQLISRITRP (196 aa)) folds into the CheB-type methylesterase domain. Catalysis depends on residues S158, H185, and D278.

The protein belongs to the CheB family. In terms of processing, phosphorylated by CheA. Phosphorylation of the N-terminal regulatory domain activates the methylesterase activity.

It is found in the cytoplasm. The enzyme catalyses [protein]-L-glutamate 5-O-methyl ester + H2O = L-glutamyl-[protein] + methanol + H(+). It catalyses the reaction L-glutaminyl-[protein] + H2O = L-glutamyl-[protein] + NH4(+). Functionally, involved in chemotaxis. Part of a chemotaxis signal transduction system that modulates chemotaxis in response to various stimuli. Catalyzes the demethylation of specific methylglutamate residues introduced into the chemoreceptors (methyl-accepting chemotaxis proteins or MCP) by CheR. Also mediates the irreversible deamidation of specific glutamine residues to glutamic acid. In Burkholderia lata (strain ATCC 17760 / DSM 23089 / LMG 22485 / NCIMB 9086 / R18194 / 383), this protein is Protein-glutamate methylesterase/protein-glutamine glutaminase 2.